The sequence spans 40 residues: Large ribosomal subunit protein bL36 (40 aa).

This sequence belongs to the bacterial ribosomal protein bL36 family.

In Corynebacterium aurimucosum (strain ATCC 700975 / DSM 44827 / CIP 107346 / CN-1) (Corynebacterium nigricans), this protein is Large ribosomal subunit protein bL36.